The following is a 322-amino-acid chain: MYESFLTGKPMDRATAMDLMQYMASPECSDAFRAAVLSVLRVRGVTEDEMMGFYEAMHAPNDVTDATDIVGTGGDMAHTINVSTASAIVAASMGLKIAKFGNRSASGNHGAADFMSETGYAFPKSTGEALRRLSRTNFVFLYAPDFLKEFALFAGVRKMLGFPTVLNFLGPILNPLSPIRRVIGTSDPSFMELYAGIARRSGMRAIILHSADGMDEISPFAKARIMHVSDLVSESYVDASSLTGPLERRNIASADPGAISGLTLSAIRGENEDGARFVALNTAPVLIINGLASDFQEGYEAALEHIMSGGPAEFLKVIAGDR.

Residues G71, 74 to 75 (GD), T79, 81 to 84 (NVST), 99 to 107 (KFGNRSASG), and A111 contribute to the 5-phospho-alpha-D-ribose 1-diphosphate site. An anthranilate-binding site is contributed by G71. S83 is a Mg(2+) binding site. N102 contributes to the anthranilate binding site. R157 provides a ligand contact to anthranilate. Positions 215 and 216 each coordinate Mg(2+).

Belongs to the anthranilate phosphoribosyltransferase family. Homodimer. It depends on Mg(2+) as a cofactor.

It catalyses the reaction N-(5-phospho-beta-D-ribosyl)anthranilate + diphosphate = 5-phospho-alpha-D-ribose 1-diphosphate + anthranilate. Its pathway is amino-acid biosynthesis; L-tryptophan biosynthesis; L-tryptophan from chorismate: step 2/5. Its function is as follows. Catalyzes the transfer of the phosphoribosyl group of 5-phosphorylribose-1-pyrophosphate (PRPP) to anthranilate to yield N-(5'-phosphoribosyl)-anthranilate (PRA). In Thermoplasma acidophilum (strain ATCC 25905 / DSM 1728 / JCM 9062 / NBRC 15155 / AMRC-C165), this protein is Anthranilate phosphoribosyltransferase.